The sequence spans 318 residues: Porphobilinogen deaminase (318 aa).

At Cys248 the chain carries S-(dipyrrolylmethanemethyl)cysteine.

This sequence belongs to the HMBS family. As to quaternary structure, monomer. Requires dipyrromethane as cofactor.

It carries out the reaction 4 porphobilinogen + H2O = hydroxymethylbilane + 4 NH4(+). It participates in porphyrin-containing compound metabolism; protoporphyrin-IX biosynthesis; coproporphyrinogen-III from 5-aminolevulinate: step 2/4. Functionally, tetrapolymerization of the monopyrrole PBG into the hydroxymethylbilane pre-uroporphyrinogen in several discrete steps. The protein is Porphobilinogen deaminase of Caulobacter sp. (strain K31).